The sequence spans 327 residues: Malate dehydrogenase (327 aa).

11 to 17 is a binding site for NAD(+); sequence GAAGQIG. R92 and R98 together coordinate substrate. NAD(+) contacts are provided by residues N105, Q112, and 129-131; that span reads VGN. Substrate contacts are provided by N131 and R162. The active-site Proton acceptor is the H187.

Belongs to the LDH/MDH superfamily. MDH type 2 family.

It catalyses the reaction (S)-malate + NAD(+) = oxaloacetate + NADH + H(+). Its function is as follows. Catalyzes the reversible oxidation of malate to oxaloacetate. This chain is Malate dehydrogenase, found in Thermus thermophilus (strain ATCC BAA-163 / DSM 7039 / HB27).